The primary structure comprises 397 residues: Ethanolaminephosphotransferase 1 (397 aa).

The residue at position 2 (Ala2) is an N-acetylalanine. The next 10 membrane-spanning stretches (helical) occupy residues 47–69, 84–103, 123–145, 150–172, 179–201, 221–243, 256–278, 291–310, 317–339, and 344–366; these read WLAPNLITFSGFLLVVFNFLLMA, HVPDWVWIVVGILNFVAYTL, LFDHGLDSWSCVYFVVTVYSIFG, GVSVFVLYLLLWVVLFSFILSHW, ILFLPWGYDISQVTISFVYIVTA, LFTAMIIGCALCVTLPMSLLNFF, VYEAMVPLFSPCLLFILSTAWIL, VFYFMVGTAFANSTCQLIVC, CPTLNWLLVPLFLVVLVVNLGVA, and SILLYTLTTAFTLAHIHYGVRVV. A non-standard amino acid (selenocysteine) is located at residue Sec387.

The protein belongs to the CDP-alcohol phosphatidyltransferase class-I family. Requires Mg(2+) as cofactor. The cofactor is Mn(2+). Widely expressed. Abundant in brain, placenta, liver and pancreas, followed by heart, skeletal muscle, lung and kidney. In brain it is strongly expressed in cerebellum, followed by the occipital pole and the frontal lobe.

The protein resides in the endoplasmic reticulum membrane. The catalysed reaction is CDP-ethanolamine + a 1,2-diacyl-sn-glycerol = a 1,2-diacyl-sn-glycero-3-phosphoethanolamine + CMP + H(+). It carries out the reaction 1-O-alkyl-2-acyl-sn-glycerol + CDP-ethanolamine = a 1-O-alkyl-2-acyl-sn-glycero-3-phosphoethanolamine + CMP + H(+). It functions in the pathway phospholipid metabolism; phosphatidylethanolamine biosynthesis; phosphatidylethanolamine from ethanolamine: step 3/3. Ethanolaminephosphotransferase that catalyzes the transfer of phosphoethanolamine (PE) from CDP-ethanolamine to lipid acceptors, the final step in the synthesis of PE via the 'Kennedy' pathway. PE is the second most abundant phospholipid of membranes in mammals and is involved in various membrane-related cellular processes. The enzyme is critical for the synthesis of several PE species and also catalyzes the synthesis of plasmanyl-PE, a lipid required for proper myelination and neurodevelopment, from 1-alkyl-2-acylglycerol. The sequence is that of Ethanolaminephosphotransferase 1 from Homo sapiens (Human).